We begin with the raw amino-acid sequence, 200 residues long: Dephospho-CoA kinase (200 aa).

Residues 4–200 enclose the DPCK domain; sequence VIGLTGGIAS…AILKKWNIID (197 aa). 12-17 contributes to the ATP binding site; it reads ASGKST.

It belongs to the CoaE family.

It localises to the cytoplasm. It catalyses the reaction 3'-dephospho-CoA + ATP = ADP + CoA + H(+). It participates in cofactor biosynthesis; coenzyme A biosynthesis; CoA from (R)-pantothenate: step 5/5. Its function is as follows. Catalyzes the phosphorylation of the 3'-hydroxyl group of dephosphocoenzyme A to form coenzyme A. The polypeptide is Dephospho-CoA kinase (Bacillus thuringiensis subsp. konkukian (strain 97-27)).